The primary structure comprises 153 residues: Penitrem biosynthesis cluster 1 protein I (153 aa).

Its pathway is secondary metabolite biosynthesis. Its function is as follows. Part of the gene cluster that mediates the biosynthesis of the indole diterpenes penitrems. The geranylgeranyl diphosphate (GGPP) synthase ptmG catalyzes the first step in penitrem biosynthesis via conversion of farnesyl pyrophosphate and isopentyl pyrophosphate into geranylgeranyl pyrophosphate (GGPP). Condensation of indole-3-glycerol phosphate with GGPP by the prenyl transferase ptmC then forms 3-geranylgeranylindole (3-GGI). Epoxidation by the FAD-dependent monooxygenase ptmM leads to a epoxidized-GGI that is substrate of the terpene cyclase ptmB for cyclization to yield paspaline. Paspaline is subsequently converted to 13-desoxypaxilline by the cytochrome P450 monooxygenase ptmP, the latter being then converted to paxilline by the cytochrome P450 monooxygenase ptmQ. Paxilline is converted to beta-paxitriol via C-10 ketoreduction by the short-chain dehydrogenase ptmH which can be monoprenylated at the C-20 by the indole diterpene prenyltransferase ptmD. A two-step elimination (acetylation and elimination) process performed by the O-acetyltransferase ptmV and ptmI leads to the production of the prenylated form of penijanthine. The FAD-linked oxidoreductase ptmO then converts the prenylated form of penijanthine into PC-M5 which is in turn transformed into PC-M4 by the aromatic dimethylallyltransferase ptmE. Five sequential oxidative transformations performed by the cytochrome P450 monooxygenases ptmK, ptmU, ptmL, ptmN and ptmJ yield the various penitrem compounds. PtmK, ptmU and ptmM are involved in the formation of the key bicyclic ring of penitrem C via the formation of the intermediates secopenitrem D and penitrem D. PtmL catalyzes the epoxidation of penitrem D and C to yield penitrem B and F, respectively. PtmJ catalyzes the last benzylic hydroxylation to convert penitrem B to prenitrem E and penitrem F to penitrem A. The polypeptide is Penitrem biosynthesis cluster 1 protein I (Penicillium ochrochloron).